Here is a 505-residue protein sequence, read N- to C-terminus: Peroxisome proliferator-activated receptor gamma (505 aa).

An O-linked (GlcNAc) threonine glycan is attached at Thr-84. Ser-112 is modified (phosphoserine). Residues 136-210 (AIECRVCGDK…VGMSHNAIRF (75 aa)) constitute a DNA-binding region (nuclear receptor). 2 NR C4-type zinc fingers span residues 139–159 (CRVC…CEGC) and 176–198 (CDLN…FQKC). Positions 205 to 280 (HNAIRFGRMP…DKSPFVIYDM (76 aa)) are interaction with FAM120B. The region spanning 238–503 (DLRALAKHLY…HPLLQEIYKD (266 aa)) is the NR LBD domain. Residue Lys-252 forms a Glycyl lysine isopeptide (Lys-Gly) (interchain with G-Cter in ubiquitin) linkage. Rosiglitazone-binding positions include 314 to 317 (QFRS), His-351, His-477, and Tyr-501. The 9aaTAD motif lies at 495–503 (PLLQEIYKD).

The protein belongs to the nuclear hormone receptor family. NR1 subfamily. In terms of assembly, interacts with FOXO1 (acetylated form). Heterodimer with other nuclear receptors, such as RXRA. The heterodimer with the retinoic acid receptor RXRA is called adipocyte-specific transcription factor ARF6. Interacts with NCOA6 coactivator, leading to a strong increase in transcription of target genes. Interacts with coactivator PPARBP, leading to a mild increase in transcription of target genes. Interacts with NOCA7 in a ligand-inducible manner. Interacts with NCOA1 and NCOA2 LXXLL motifs. Interacts with ASXL1, ASXL2, DNTTIP2, FAM120B, MAP2K1/MEK1, NR0B2, PDPK1, PRDM16, PRMT2 and TGFB1I1. Interacts (when activated by agonist) with PPP5C. Interacts with HELZ2 and THRAP3; the interaction stimulates the transcriptional activity of PPARG. Interacts with PER2, the interaction is ligand dependent and blocks PPARG recruitment to target promoters. Interacts with NOCT. Interacts with ACTN4. Interacts (when in the liganded conformation) with GPS2. Interacts with CRY1 and CRY2 in a ligand-dependent manner. In the absence of hormonal ligand, interacts with TACC1. In macrophages, interacts with PAQR3 and STUB1; the interactions promote PPARG poylubiquitination and STUB1-mediated degradation. Post-translationally, O-GlcNAcylation at Thr-84 reduces transcriptional activity in adipocytes. Phosphorylated in basal conditions and dephosphorylated when treated with the ligand. May be dephosphorylated by PPP5C. The phosphorylated form may be inactive and dephosphorylation at Ser-112 induces adipogenic activity. In terms of processing, ubiquitinated by E3 ubiquitin-protein ligase complex containing FBXO9; leading to proteasomal degradation. Ubiquitinated at Lys-252 by TRIM55 leading to proteasomal degradation. Ubiquitinated by E3 ubiquitin-protein ligase STUB1/CHIP; leading to proteasomal degradation. Highest expression in adipose tissue. Lower in skeletal muscle, spleen, heart and liver. Also detectable in placenta, lung and ovary.

Its subcellular location is the nucleus. It localises to the cytoplasm. With respect to regulation, PDPK1 activates its transcriptional activity independently of its kinase activity. Its function is as follows. Nuclear receptor that binds peroxisome proliferators such as hypolipidemic drugs and fatty acids. Once activated by a ligand, the nuclear receptor binds to DNA specific PPAR response elements (PPRE) and modulates the transcription of its target genes, such as acyl-CoA oxidase. It therefore controls the peroxisomal beta-oxidation pathway of fatty acids. Key regulator of adipocyte differentiation and glucose homeostasis. ARF6 acts as a key regulator of the tissue-specific adipocyte P2 (aP2) enhancer. Acts as a critical regulator of gut homeostasis by suppressing NF-kappa-B-mediated pro-inflammatory responses. Plays a role in the regulation of cardiovascular circadian rhythms by regulating the transcription of BMAL1 in the blood vessels. In terms of biological role, (Microbial infection) Upon treatment with M.tuberculosis or its lipoprotein LpqH, phosphorylation of MAPK p38 and IL-6 production are modulated, probably via this protein. The protein is Peroxisome proliferator-activated receptor gamma (PPARG) of Homo sapiens (Human).